The primary structure comprises 303 residues: NmrA-like family domain-containing oxidoreductase FVEG_08287 (303 aa).

Residues L8–L13, L8–G14, L36–S39, R37, Q56–G57, I77–R79, and F159–F162 contribute to the NADP(+) site.

This sequence belongs to the NmrA-type oxidoreductase family.

Its function is as follows. NmrA-like family domain-containing oxidoreductase; part of the Fusarium detoxification of benzoxazolinone cluster 1 (FDB1) involved in the degradation of benzoxazolinones produced by the host plant. Maize, wheat, and rye produce the 2 benzoxazinone phytoanticipins 2,4-dihy-droxy-7-methoxy-1,4-benzoxazin-3-one (DIMBOA) and 2,4-dihydroxy-1,4-benzoxazin-3-one (DIBOA) that, due to their inherent instability once released, spontaneously degrade to the more stable corresponding benzoxazolinones, 6-methoxy-2-benzoxazolinone (MBOA) and 2-benzoxazolinone (BOA), respectively. The first step in the detoxification of benzoxazolinones involves the hydrolysis of the cyclic ester bond of benzoxazolinones by the FDB1 cluster gamma-lactamase MBL1 to aminophenols. MBL1 is able to convert BOA into 2-aminophenol (2-AP), as well as MBOA into 5-methoxy-2-aminophenol (2-AMP). The FDB2 cluster N-malonyltransferase FDB2/NAT1 then metabolizes aminophenols via N-malonylation to non-toxic malonamic acids. FDB2/NAT1 converts 2-AP into N-(2-hydroxyphenyl) malonamic acid (HPMA) and 2-AMP into N-(2-hydroxy-4-methoxyphenyl) malonamic acid (HMPMA). The duplicated dienlactone hydrolases DLH1 and DLH2 may provide redundant function for hydrolyzing the lactone moiety in the BOA molecule. The roles of the amidases an other enzymes encoded by the 2 FDB clusters have not been identified so far. In Gibberella moniliformis (strain M3125 / FGSC 7600) (Maize ear and stalk rot fungus), this protein is NmrA-like family domain-containing oxidoreductase FVEG_08287.